We begin with the raw amino-acid sequence, 372 residues long: Invasion protein InvE (372 aa).

Residues 1–19 (MIPGSTSGISFSRILSRQT) show a composition bias toward polar residues. Residues 1–46 (MIPGSTSGISFSRILSRQTSHQDATQHTDAQQAEIQQAAEDSSPGA) are disordered. Positions 21–40 (HQDATQHTDAQQAEIQQAAE) are enriched in low complexity.

The protein localises to the cell membrane. Its function is as follows. Involved in the triggering of intracellular events that lead to microbial internalization. These events include increase in calcium level, redistribution of actin microfilaments, and changes in the normal structure of the microvilli. Encoded within the type III secretion system (SPI-1 T3SS), it is essential for the translocation of protein effectors into host cells. Forms a complex with SipB and SipC in the presence of their chaperone SicA. Positively regulates the secretion of SPI-1 T3SS effector proteins SipB, SipC and SipD and negatively influences the secretion of SipA, SopA and SptP. In Salmonella typhimurium (strain LT2 / SGSC1412 / ATCC 700720), this protein is Invasion protein InvE (invE).